The following is a 232-amino-acid chain: Ribose-5-phosphate isomerase A (232 aa).

Residues 28-31, 83-86, and 96-99 contribute to the substrate site; these read TGST, DGAD, and KGGG. The active-site Proton acceptor is the Glu-105. Lys-123 serves as a coordination point for substrate.

Belongs to the ribose 5-phosphate isomerase family. In terms of assembly, homodimer.

It carries out the reaction aldehydo-D-ribose 5-phosphate = D-ribulose 5-phosphate. The protein operates within carbohydrate degradation; pentose phosphate pathway; D-ribose 5-phosphate from D-ribulose 5-phosphate (non-oxidative stage): step 1/1. Catalyzes the reversible conversion of ribose-5-phosphate to ribulose 5-phosphate. This Rhodopseudomonas palustris (strain HaA2) protein is Ribose-5-phosphate isomerase A.